A 314-amino-acid chain; its full sequence is Fructose-1,6-bisphosphatase class 1 (314 aa).

Mg(2+)-binding residues include Glu-91, Asp-112, Leu-114, and Asp-115. Substrate is bound by residues 115–118 (DGSS), Tyr-223, and Lys-254. A Mg(2+)-binding site is contributed by Glu-260.

It belongs to the FBPase class 1 family. Homotetramer. Mg(2+) is required as a cofactor.

The protein localises to the cytoplasm. It carries out the reaction beta-D-fructose 1,6-bisphosphate + H2O = beta-D-fructose 6-phosphate + phosphate. It participates in carbohydrate biosynthesis; gluconeogenesis. The chain is Fructose-1,6-bisphosphatase class 1 from Geobacter metallireducens (strain ATCC 53774 / DSM 7210 / GS-15).